The primary structure comprises 533 residues: Retinoid isomerohydrolase (533 aa).

An N-acetylserine modification is found at Ser-2. A phosphothreonine mark is found at Thr-101 and Thr-105. The S-palmitoyl cysteine; in membrane form moiety is linked to residue Cys-112. N6-acetyllysine is present on Lys-113. Ser-117 is subject to Phosphoserine. Residue His-180 coordinates Fe cation. The S-palmitoyl cysteine; in membrane form moiety is linked to residue Cys-231. Fe cation-binding residues include His-241 and His-313. 2 S-palmitoyl cysteine; in membrane form lipidation sites follow: Cys-329 and Cys-330. His-527 lines the Fe cation pocket.

It belongs to the carotenoid oxygenase family. In terms of assembly, interacts with MYO7A; this mediates light-dependent intracellular transport of RPE65. The cofactor is Fe(2+). In terms of processing, palmitoylation by LRAT regulates ligand binding specificity; the palmitoylated form (membrane form) specifically binds all-trans-retinyl-palmitate, while the soluble unpalmitoylated form binds all-trans-retinol (vitamin A). In terms of tissue distribution, retinal pigment epithelium specific.

It localises to the cytoplasm. The protein resides in the cell membrane. The protein localises to the microsome membrane. The catalysed reaction is an all-trans-retinyl ester + H2O = 11-cis-retinol + a fatty acid + H(+). It carries out the reaction lutein = (3R,3'S)-zeaxanthin. It catalyses the reaction all-trans-retinyl hexadecanoate + H2O = 11-cis-retinol + hexadecanoate + H(+). Its function is as follows. Critical isomerohydrolase in the retinoid cycle involved in regeneration of 11-cis-retinal, the chromophore of rod and cone opsins. Catalyzes the cleavage and isomerization of all-trans-retinyl fatty acid esters to 11-cis-retinol which is further oxidized by 11-cis retinol dehydrogenase to 11-cis-retinal for use as visual chromophore. Essential for the production of 11-cis retinal for both rod and cone photoreceptors. Also capable of catalyzing the isomerization of lutein to meso-zeaxanthin an eye-specific carotenoid. The soluble form binds vitamin A (all-trans-retinol), making it available for LRAT processing to all-trans-retinyl ester. The membrane form, palmitoylated by LRAT, binds all-trans-retinyl esters, making them available for IMH (isomerohydrolase) processing to all-cis-retinol. The soluble form is regenerated by transferring its palmitoyl groups onto 11-cis-retinol, a reaction catalyzed by LRAT. The protein is Retinoid isomerohydrolase (RPE65) of Bos taurus (Bovine).